The sequence spans 1514 residues: Helicase SWR1 (1514 aa).

In terms of domain architecture, HSA spans 339-411 (ISYFYKQQDL…EERHKKSLAR (73 aa)). The segment covering 465-480 (QVNDDGRSSTPSSDSN) has biased composition (polar residues). 2 disordered regions span residues 465 to 524 (QVND…PTDE) and 538 to 641 (FNGS…KDQV). The span at 484-508 (SESDDDMDDELSTSSDEDEEVDADV) shows a compositional bias: acidic residues. Positions 513 to 524 (SPASTEATPTDE) are enriched in polar residues. Residues 547–563 (SRNKDEKFPTLDKHESS) show a composition bias toward basic and acidic residues. Low complexity predominate over residues 564-586 (SSESSVMTGEESSIYSSSENESQ). The segment covering 588-597 (ENDRESDDKT) has biased composition (basic and acidic residues). Over residues 612–623 (SDGDLDLDDSED) the composition is skewed to acidic residues. The 166-residue stretch at 708-873 (ASLYNNHTNG…WSLLYFLMPQ (166 aa)) folds into the Helicase ATP-binding domain. 721–728 (DEMGLGKT) contributes to the ATP binding site. The DEAH box signature appears at 824–827 (DEAH). Positions 1247–1400 (KLQKLAILLQ…NVVIQEGDFT (154 aa)) constitute a Helicase C-terminal domain. The interval 1469–1490 (NDDFDESTEKKAANEEEENHAE) is disordered. Residues 1475–1490 (STEKKAANEEEENHAE) show a composition bias toward basic and acidic residues.

The protein belongs to the SNF2/RAD54 helicase family. SWR1 subfamily. In terms of assembly, component of the SWR1 chromatin-remodeling complex composed of at least ACT1, ARP4, RVB1, RVB2, ARP6, YAF9, VPS71, VPS72, SWC3, SWC4, SWC5, SWC7 and SWR1, and perhaps BDF1.

The protein resides in the nucleus. The catalysed reaction is ATP + H2O = ADP + phosphate + H(+). Functionally, catalytic component of the SWR1 complex which mediates the ATP-dependent exchange of histone H2A for the H2A variant HZT1 leading to transcriptional regulation of selected genes by chromatin remodeling. The polypeptide is Helicase SWR1 (SWR1) (Saccharomyces cerevisiae (strain ATCC 204508 / S288c) (Baker's yeast)).